A 210-amino-acid chain; its full sequence is Na(+)-translocating NADH-quinone reductase subunit D (210 aa).

5 helical membrane-spanning segments follow: residues 42–62 (FVMT…VSLI), 72–92 (IIVQ…VLKA), 103–123 (VFVG…AFAM), 131–151 (LIDG…VGFF), and 178–198 (NGLM…IWVI).

It belongs to the NqrDE/RnfAE family. In terms of assembly, composed of six subunits; NqrA, NqrB, NqrC, NqrD, NqrE and NqrF.

The protein localises to the cell inner membrane. It carries out the reaction a ubiquinone + n Na(+)(in) + NADH + H(+) = a ubiquinol + n Na(+)(out) + NAD(+). Functionally, NQR complex catalyzes the reduction of ubiquinone-1 to ubiquinol by two successive reactions, coupled with the transport of Na(+) ions from the cytoplasm to the periplasm. NqrA to NqrE are probably involved in the second step, the conversion of ubisemiquinone to ubiquinol. The chain is Na(+)-translocating NADH-quinone reductase subunit D from Vibrio campbellii (strain ATCC BAA-1116).